Here is a 222-residue protein sequence, read N- to C-terminus: DNA mismatch repair protein MutH (222 aa).

Belongs to the MutH family.

The protein localises to the cytoplasm. Sequence-specific endonuclease that cleaves unmethylated GATC sequences. It is involved in DNA mismatch repair. This chain is DNA mismatch repair protein MutH, found in Pasteurella multocida (strain Pm70).